The chain runs to 978 residues: Receptor like protein 21 (978 aa).

An N-terminal signal peptide occupies residues M1–G27. Topologically, residues C28–M930 are extracellular. N-linked (GlcNAc...) asparagine glycans are attached at residues N64, N79, N102, N116, and N155. LRR repeat units follow at residues L141–S167, T169–D189, L190–L213, K214–N237, L238–K262, K264–L287, K288–S310, E312–N335, T337–P361, N362–Q385, K386–N409, N410–V432, H433–A455, P457–M480, K481–G504, V506–F529, P530–S553, T554–F577, Y579–M601, P602–E625, G627–L646, K647–S671, N673–L693, S694–N716, L788–D811, L812–K835, I837–S859, and L860–T885. N204 carries an N-linked (GlcNAc...) asparagine glycan. N335 carries N-linked (GlcNAc...) asparagine glycosylation. Residues N397 and N420 are each glycosylated (N-linked (GlcNAc...) asparagine). Residues N463, N482, and N492 are each glycosylated (N-linked (GlcNAc...) asparagine). N-linked (GlcNAc...) asparagine glycosylation is present at N552. N636 carries N-linked (GlcNAc...) asparagine glycosylation. Residues N681 and N716 are each glycosylated (N-linked (GlcNAc...) asparagine). N819 carries N-linked (GlcNAc...) asparagine glycosylation. N872 is a glycosylation site (N-linked (GlcNAc...) asparagine). Positions T902 to E922 are disordered. A helical transmembrane segment spans residues M931–L951. Residues M952–P978 are Cytoplasmic-facing.

It belongs to the RLP family.

The protein localises to the cell membrane. This Arabidopsis thaliana (Mouse-ear cress) protein is Receptor like protein 21.